A 149-amino-acid polypeptide reads, in one-letter code: Decarboxylase AgnL1 (149 aa).

In terms of domain architecture, EthD spans 30 to 125; the sequence is PGMSEEDYRH…VGDHEKFADT (96 aa).

The protein belongs to the tpcK family.

It catalyses the reaction atrochrysone carboxylate + H(+) = atrochrysone + CO2. Its pathway is secondary metabolite biosynthesis. Decarboxylase; part of the gene cluster that mediates the biosynthesis of agnestins, dihydroxy-xanthone metabolites. The pathway begins with the assembly and cyclization of atrochrysone thioester by the non-reducing polyketide synthase Agnpks1. The atrochrysone carboxyl ACP thioesterase AgnL7 then breaks the thioester bond and releases the atrochrysone carboxylic acid as the first enzyme-free intermediate. The decarboxylase AgnL1 then catalyzes the concerted decarboxylation-elimination required to convert atochrysone carboxylic acid into emodin anthrone, which is further oxidized to emodin by the anthrone oxygenase AgnL2. Emodin then undergoes reduction catalyzed by the oxidoreductase AgnL4 to yield the dihydroquinone tautomer which is the substrate for reduction by the short chain dehydrogenase AgnL6 reduction to produce hydroxyketone, followed by AgnL8 dehydration and likely spontaneous autoxidation to chrysophanol. Baeyer-Villiger oxidation by the oxidase AgnL3 leads to monodictyphenone via cleavage of the C-10/C-10a bond of chrysophanol. Alternative cleavage at the C-4a/C-10 bond of chrysophanol also leads to the formation some cephalone F. Further conversion to agnestins A and B, requires reduction to dihydro-monodictyphenone, oxidation to agnestin C probably via an epoxide, and rearrangement to either agnestin A or agnestin B directly, although agnestin A or agnestin B can also interconvert. Within the cluster, AgnR1 is the only unassigned oxidoreductase present which could be involved in this conversion. However, AgnR1 seems not to be involved in this step, and thus genes involved in the proposed oxidation/reduction may be located elsewhere on the genome. Further agnestin A derivatives are probably formed by spontaneous decarboxylations, dehydrations and methanolysis reactions. The chain is Decarboxylase AgnL1 from Paecilomyces divaricatus (Penicillium divaricatum).